A 297-amino-acid chain; its full sequence is Ribosomal RNA small subunit methyltransferase H (297 aa).

S-adenosyl-L-methionine-binding positions include 34–36, Asp-54, Phe-88, Asp-106, and Gln-113; that span reads AGH. The tract at residues 272–297 is disordered; it reads PLTAGEEETDRNPRARSAKLRAAEKK.

It belongs to the methyltransferase superfamily. RsmH family.

The protein resides in the cytoplasm. It catalyses the reaction cytidine(1402) in 16S rRNA + S-adenosyl-L-methionine = N(4)-methylcytidine(1402) in 16S rRNA + S-adenosyl-L-homocysteine + H(+). Its function is as follows. Specifically methylates the N4 position of cytidine in position 1402 (C1402) of 16S rRNA. This chain is Ribosomal RNA small subunit methyltransferase H, found in Acidobacterium capsulatum (strain ATCC 51196 / DSM 11244 / BCRC 80197 / JCM 7670 / NBRC 15755 / NCIMB 13165 / 161).